Reading from the N-terminus, the 545-residue chain is Chromosomal replication initiator protein DnaA (545 aa).

The tract at residues 1–72 (MNDFWQHCSA…DMARDFWQAP (72 aa)) is domain I, interacts with DnaA modulators. Positions 72-208 (PVDVQFVLDP…GETDSMYERS (137 aa)) are domain II. The segment covering 90–105 (AAAPAPASARPASAPG) has biased composition (low complexity). Disordered regions lie at residues 90 to 112 (AAAP…GSAG) and 181 to 204 (AAAR…TDSM). Polar residues predominate over residues 189–201 (PGQSASSNGNGET). Positions 209–425 (KLNPVLTFDN…GALRKILAYS (217 aa)) are domain III, AAA+ region. Residues G253, G255, K256, and T257 each coordinate ATP. Positions 426–545 (KFHGREITIE…LHVLEQTLKG (120 aa)) are domain IV, binds dsDNA.

It belongs to the DnaA family. As to quaternary structure, oligomerizes as a right-handed, spiral filament on DNA at oriC.

Its subcellular location is the cytoplasm. In terms of biological role, plays an essential role in the initiation and regulation of chromosomal replication. ATP-DnaA binds to the origin of replication (oriC) to initiate formation of the DNA replication initiation complex once per cell cycle. Binds the DnaA box (a 9 base pair repeat at the origin) and separates the double-stranded (ds)DNA. Forms a right-handed helical filament on oriC DNA; dsDNA binds to the exterior of the filament while single-stranded (ss)DNA is stabiized in the filament's interior. The ATP-DnaA-oriC complex binds and stabilizes one strand of the AT-rich DNA unwinding element (DUE), permitting loading of DNA polymerase. After initiation quickly degrades to an ADP-DnaA complex that is not apt for DNA replication. Binds acidic phospholipids. The protein is Chromosomal replication initiator protein DnaA of Paraburkholderia phytofirmans (strain DSM 17436 / LMG 22146 / PsJN) (Burkholderia phytofirmans).